The primary structure comprises 460 residues: MAADKIDTIVSLSKRRGFVFPCSEIYGGQRAAWDYGPLGVELKENLKRQWWRYMVTSREDVVGLDSSVILAPEVWVASGHVATFTDPLTECTSCHKRFRADHLEEAYEEKKGHAPENGLADLNCPNCGNKGTFTEPKQFSGLLSTHLGPTQDSGSVAYLRPETAQGIFTNFAQVQTTSRRKPPFGIAQMGKSFRNEITPGNFIFRTREFEQMEMEFFVKPGEDEKWQEYWMEQRWNWYTGLGLREENMRWYEHPAEKLSHYSKRTADIEYRFSFGGSEWGELEGVANRTDYDLSSHAKASGQDLSYYDQEAQERWTPYVIEPAAGVGRAMLAFLLDAYIEDEAPNAKGKLEKRTVLRLDPRLSPVKVAVLPLSRNPELSPKAKGLAQALRQNWNIEFDDAGAIGRRYRRQDEIGTPFCVTVDFDTLDDNAVTVRERDTMKQERVSLDQIEGYLASRLVGC.

The substrate site is built by arginine 99 and glutamate 162. ATP-binding positions include 194-196, 204-209, 281-282, and 325-328; these read RNE, FRTREF, EL, and GVGR. 209 to 213 lines the substrate pocket; sequence FEQME. Residue 321–325 coordinates substrate; sequence EPAAG.

Belongs to the class-II aminoacyl-tRNA synthetase family. In terms of assembly, homodimer.

The protein resides in the cytoplasm. The enzyme catalyses tRNA(Gly) + glycine + ATP = glycyl-tRNA(Gly) + AMP + diphosphate. In terms of biological role, catalyzes the attachment of glycine to tRNA(Gly). The polypeptide is Glycine--tRNA ligase (Streptomyces coelicolor (strain ATCC BAA-471 / A3(2) / M145)).